We begin with the raw amino-acid sequence, 102 residues long: Small ribosomal subunit protein uS10 (102 aa).

Belongs to the universal ribosomal protein uS10 family. As to quaternary structure, part of the 30S ribosomal subunit.

In terms of biological role, involved in the binding of tRNA to the ribosomes. The protein is Small ribosomal subunit protein uS10 of Bacillus cereus (strain ATCC 10987 / NRS 248).